The primary structure comprises 190 residues: Peptidyl-tRNA hydrolase (190 aa).

Phenylalanine 14 serves as a coordination point for tRNA. Histidine 19 serves as the catalytic Proton acceptor. TRNA contacts are provided by methionine 64, asparagine 66, and asparagine 112.

It belongs to the PTH family. In terms of assembly, monomer.

The protein localises to the cytoplasm. It carries out the reaction an N-acyl-L-alpha-aminoacyl-tRNA + H2O = an N-acyl-L-amino acid + a tRNA + H(+). Its function is as follows. Hydrolyzes ribosome-free peptidyl-tRNAs (with 1 or more amino acids incorporated), which drop off the ribosome during protein synthesis, or as a result of ribosome stalling. Functionally, catalyzes the release of premature peptidyl moieties from peptidyl-tRNA molecules trapped in stalled 50S ribosomal subunits, and thus maintains levels of free tRNAs and 50S ribosomes. This is Peptidyl-tRNA hydrolase from Staphylococcus aureus (strain Mu3 / ATCC 700698).